A 188-amino-acid chain; its full sequence is Adenine phosphoribosyltransferase (188 aa).

It belongs to the purine/pyrimidine phosphoribosyltransferase family. In terms of assembly, homodimer.

It localises to the cytoplasm. The catalysed reaction is AMP + diphosphate = 5-phospho-alpha-D-ribose 1-diphosphate + adenine. It functions in the pathway purine metabolism; AMP biosynthesis via salvage pathway; AMP from adenine: step 1/1. Catalyzes a salvage reaction resulting in the formation of AMP, that is energically less costly than de novo synthesis. In Burkholderia multivorans (strain ATCC 17616 / 249), this protein is Adenine phosphoribosyltransferase.